The chain runs to 374 residues: Carnitine monooxygenase oxygenase subunit (374 aa).

Residues 47-155 enclose the Rieske domain; the sequence is WICVAHSSEL…LEEYAGFVFI (109 aa). The [2Fe-2S] cluster site is built by cysteine 89, histidine 91, cysteine 109, and histidine 112. Residues histidine 211, histidine 216, and aspartate 325 each contribute to the Fe cation site.

Belongs to the bacterial ring-hydroxylating dioxygenase alpha subunit family. CntA subfamily. In terms of assembly, composed of an oxygenase subunit and a reductase subunit. It depends on [2Fe-2S] cluster as a cofactor. Requires Fe cation as cofactor.

It carries out the reaction (R)-carnitine + NADH + O2 + H(+) = (3R)-3-hydroxy-4-oxobutanoate + trimethylamine + NAD(+) + H2O. The enzyme catalyses (R)-carnitine + NADPH + O2 + H(+) = (3R)-3-hydroxy-4-oxobutanoate + trimethylamine + NADP(+) + H2O. The protein operates within amine and polyamine metabolism; carnitine metabolism. Converts carnitine to trimethylamine and malic semialdehyde. This chain is Carnitine monooxygenase oxygenase subunit (yeaW), found in Escherichia coli O157:H7.